The following is a 471-amino-acid chain: UDP-N-acetylmuramate--L-alanine ligase (471 aa).

An ATP-binding site is contributed by 114 to 120 (GTHGKTT).

This sequence belongs to the MurCDEF family.

It is found in the cytoplasm. The enzyme catalyses UDP-N-acetyl-alpha-D-muramate + L-alanine + ATP = UDP-N-acetyl-alpha-D-muramoyl-L-alanine + ADP + phosphate + H(+). It functions in the pathway cell wall biogenesis; peptidoglycan biosynthesis. Cell wall formation. The protein is UDP-N-acetylmuramate--L-alanine ligase of Brucella abortus (strain S19).